Consider the following 316-residue polypeptide: Pantothenate kinase (316 aa).

95 to 102 is a binding site for ATP; it reads GSVAVGKS.

The protein belongs to the prokaryotic pantothenate kinase family.

It is found in the cytoplasm. The catalysed reaction is (R)-pantothenate + ATP = (R)-4'-phosphopantothenate + ADP + H(+). It participates in cofactor biosynthesis; coenzyme A biosynthesis; CoA from (R)-pantothenate: step 1/5. The chain is Pantothenate kinase from Hamiltonella defensa subsp. Acyrthosiphon pisum (strain 5AT).